A 735-amino-acid polypeptide reads, in one-letter code: MLKLFSAFRKDKIWDFDGGIHPPEMKSQSNGTPLRQVPLAPRFVIPLKQHIGAEGELCVSVGDRVLRGQALTRGRGRMLPVHAPTSGTVIAIAPHSTAHPSALAELSVIIDADGEDRWIEREGWSDYRAHSREALIERIHQYGVAGLGGAGFPTGVKLQGGGDKITTLIINAAECEPYITADDRLMQDCAAQIVEGIRILAHILQPREVLIGIEDNKPQAISMLRAVLADAHDISLRVIPTKYPSGGAKQLTQILTGKQVPHGGRSSDIGVLMQNVGTAYAVKRAVVDGEPITERVVTLTGEAISRPGNVWARLGTPVRHLLNDAGFCPSADQMVIMGGPLMGFTLPWLDVPVVKITNCLLAPSVTEMGAPQEEKSCIRCSACADACPADLLPQQLYWFSKGQQHDKATAHHIADCIECGACAWVCPSNIPLVQYFRQEKAEINAIRLEEKRAAEAKARFEARQARLEREKAARLARHKSAAVQPAAKDQDAIAAALARVKEKQAQATQPVVIQAGSLPDNSAVIAAREARKAQARAKQAAHPMADSAISGDDPRKAAVEAAIARAKARKQEQQAGSEPAEPVDPRKAAVEAAIARAKARKQEQQAGSEPAEPVDPRKAAVEAAIARAKARKQEQQAGSEPAEPVDPRKAAVEAAIARAKARKQEQQAGSEPAEPVDPRKAAVEAAIARAKARKQEQQTVSEPVEPADPRKAAVAAAIARVQAKKAAQQQVVNED.

4Fe-4S ferredoxin-type domains lie at 368–397 and 407–436; these read MGAPQEEKSCIRCSACADACPADLLPQQLY and KATAHHIADCIECGACAWVCPSNIPLVQYF. [4Fe-4S] cluster contacts are provided by C377, C380, C383, C387, C416, C419, C422, and C426. The tract at residues 534-711 is disordered; that stretch reads QARAKQAAHP…EPVEPADPRK (178 aa).

It belongs to the 4Fe4S bacterial-type ferredoxin family. RnfC subfamily. In terms of assembly, the complex is composed of six subunits: RsxA, RsxB, RsxC, RsxD, RsxE and RsxG. [4Fe-4S] cluster serves as cofactor.

The protein resides in the cell inner membrane. Its function is as follows. Part of a membrane-bound complex that couples electron transfer with translocation of ions across the membrane. Required to maintain the reduced state of SoxR. The chain is Ion-translocating oxidoreductase complex subunit C from Salmonella paratyphi A (strain ATCC 9150 / SARB42).